Consider the following 121-residue polypeptide: Basic phospholipase A2 BmTX-I (121 aa).

7 disulfides stabilise this stretch: C26-C114, C28-C45, C44-C95, C50-C121, C51-C88, C58-C82, and C76-C86. Residues Y27, G29, and G31 each coordinate Ca(2+). Residue H48 is part of the active site. D49 contacts Ca(2+). D89 is an active-site residue.

The cofactor is Ca(2+). In terms of tissue distribution, expressed by the venom gland.

It is found in the secreted. The catalysed reaction is a 1,2-diacyl-sn-glycero-3-phosphocholine + H2O = a 1-acyl-sn-glycero-3-phosphocholine + a fatty acid + H(+). With respect to regulation, inhibited by magnesium, cadmium and manganese ions. Also inhibited by crotapotin. In terms of biological role, snake venom phospholipase A2 (PLA2) that shows enzymatic activity in the presence of a synthetic substrate. In vitro, blocks the neuromuscular transmission in young chick biventer cervicis preparations. In mice, induces myonecrosis and a systemic interleukin-6 response upon intramuscular injection. Also induces edema and exerts a strong pro-inflammatory effect. PLA2 catalyzes the calcium-dependent hydrolysis of the 2-acyl groups in 3-sn-phosphoglycerides. The polypeptide is Basic phospholipase A2 BmTX-I (Bothrops moojeni (Lance-headed viper)).